The following is a 571-amino-acid chain: Putative diflavin flavoprotein A 1 (571 aa).

Positions 43–236 (ENGTTYNSFL…PPVQLVATGH (194 aa)) are zinc metallo-hydrolase. 6 residues coordinate Fe cation: His92, Glu94, Asp96, His159, Asp178, and His236. The region spanning 265-426 (VAIFYAANYG…DLDKALGRLS (162 aa)) is the Flavodoxin-like domain. Residues 427–571 (GGLYIITAQK…VHHRKVGNHY (145 aa)) are flavodoxin-reductase-like.

It in the N-terminal section; belongs to the zinc metallo-hydrolase group 3 family. The protein in the C-terminal section; belongs to the flavodoxin reductase family. Fe cation serves as cofactor.

Mediates electron transfer from NADH to oxygen, reducing it to water. This modular protein has 3 redox cofactors, in other organisms the same activity requires 2 or 3 proteins. In Thermosynechococcus vestitus (strain NIES-2133 / IAM M-273 / BP-1), this protein is Putative diflavin flavoprotein A 1 (dfa1).